A 301-amino-acid polypeptide reads, in one-letter code: Large ribosomal subunit protein uL18y (301 aa).

Residues 247–267 (RAEPNHKKTEKSAPKEHKRYN) form a disordered region. The segment covering 249 to 261 (EPNHKKTEKSAPK) has biased composition (basic and acidic residues).

It belongs to the universal ribosomal protein uL18 family. In terms of assembly, component of the large ribosomal subunit (LSU).

The protein localises to the cytoplasm. The protein resides in the nucleus. It is found in the nucleolus. It localises to the nucleoplasm. Its function is as follows. Component of the ribosome, a large ribonucleoprotein complex responsible for the synthesis of proteins in the cell. The small ribosomal subunit (SSU) binds messenger RNAs (mRNAs) and translates the encoded message by selecting cognate aminoacyl-transfer RNA (tRNA) molecules. The large subunit (LSU) contains the ribosomal catalytic site termed the peptidyl transferase center (PTC), which catalyzes the formation of peptide bonds, thereby polymerizing the amino acids delivered by tRNAs into a polypeptide chain. The nascent polypeptides leave the ribosome through a tunnel in the LSU and interact with protein factors that function in enzymatic processing, targeting, and the membrane insertion of nascent chains at the exit of the ribosomal tunnel. Seems involved in the regulation of cell proliferation. Essential in leaf polarity establishment, probably having a role for translation in leaf dorsoventral patterning to specify leaf adaxial identity. This Arabidopsis thaliana (Mouse-ear cress) protein is Large ribosomal subunit protein uL18y.